The primary structure comprises 217 residues: Glycosylphosphatidylinositol anchor biosynthesis protein 11 (217 aa).

An N-linked (GlcNAc...) asparagine glycan is attached at Asn-20. 6 helical membrane-spanning segments follow: residues 41–61 (VYVR…LYWF), 66–86 (DFNL…YLIF), 107–127 (FITL…IVLF), 139–159 (WLLA…VFNC), 169–189 (YFIS…LDWD), and 197–217 (VPLI…GGYI).

The protein belongs to the PIGF family.

Its subcellular location is the endoplasmic reticulum membrane. The protein operates within glycolipid biosynthesis; glycosylphosphatidylinositol-anchor biosynthesis. Acts in the GPI biosynthetic pathway between GlcNAc-PI synthesis and GPI transfer to protein. This Kluyveromyces lactis (strain ATCC 8585 / CBS 2359 / DSM 70799 / NBRC 1267 / NRRL Y-1140 / WM37) (Yeast) protein is Glycosylphosphatidylinositol anchor biosynthesis protein 11 (GPI11).